The chain runs to 426 residues: MKKPIHKVLYVQVIVAIIIGIGLGHFYPDLAVDMKPLGDGFIKLIKMVIGPIIFCTVVTGIAGMEDMKKVGRVGGKALLYFEIVSTFALVLGLIATHVLKPGVGFNIDPATLDGKAVASYAAKAHGQTTVDFLMHIIPDTLVSAFAQGEILQILLIALLFGAVLATAGEKGKVVTGFIDGLSHVLFGIVRIITKLAPIGAFGAMAFTIGKYGIGSLLPMLKLIGTFYLTSVVFVVVVLGIIARAVGFNILRFVAYIKEEMLIVLGTSSSEAALPQLMLKLERLGCSRSVVGLVVPTGYSFNLDGTNIYMTMAVLFIAQATNTDLTWTQQLTLLAVTMLTSKGASGVTGAGFITLAATLAVVPTIPLSGMVLILGIDRFMSECRALTNIVGNGVATVVVSAWEKELDRSKLNAALRGDVAIKEPAGV.

A run of 8 helical transmembrane segments spans residues 8–28 (VLYV…HFYP), 44–64 (LIKM…IAGM), 78–98 (LLYF…ATHV), 148–168 (GEIL…ATAG), 173–193 (VVTG…RIIT), 222–242 (LIGT…GIIA), 297–317 (GYSF…LFIA), and 355–375 (AATL…ILGI).

Belongs to the dicarboxylate/amino acid:cation symporter (DAACS) (TC 2.A.23) family.

Its subcellular location is the cell inner membrane. Functionally, responsible for the transport of dicarboxylates such as succinate, fumarate, and malate from the periplasm across the membrane. This Paraburkholderia xenovorans (strain LB400) protein is C4-dicarboxylate transport protein.